Here is a 181-residue protein sequence, read N- to C-terminus: Oligoribonuclease (181 aa).

Residues 8-171 (LIWIDLEMTG…QDIQESIAEL (164 aa)) enclose the Exonuclease domain. Tyrosine 129 is an active-site residue.

Belongs to the oligoribonuclease family.

Its subcellular location is the cytoplasm. In terms of biological role, 3'-to-5' exoribonuclease specific for small oligoribonucleotides. The protein is Oligoribonuclease of Shewanella putrefaciens (strain CN-32 / ATCC BAA-453).